The primary structure comprises 368 residues: Chaperone protein DnaJ (368 aa).

The J domain maps to 5–69 (DYYEVLGLDK…QKRAQYDRFG (65 aa)). The CR-type zinc-finger motif lies at 126-208 (GKTETIELEI…CHGSGHVKKK (83 aa)). The Zn(2+) site is built by C139, C142, C156, C159, C182, C185, C196, and C199. CXXCXGXG motif repeat units lie at residues 139-146 (CDTCMGSG), 156-163 (CNRCGGSG), 182-189 (CSQCHGSG), and 196-203 (CPTCHGSG).

This sequence belongs to the DnaJ family. As to quaternary structure, homodimer. It depends on Zn(2+) as a cofactor.

It is found in the cytoplasm. Functionally, participates actively in the response to hyperosmotic and heat shock by preventing the aggregation of stress-denatured proteins and by disaggregating proteins, also in an autonomous, DnaK-independent fashion. Unfolded proteins bind initially to DnaJ; upon interaction with the DnaJ-bound protein, DnaK hydrolyzes its bound ATP, resulting in the formation of a stable complex. GrpE releases ADP from DnaK; ATP binding to DnaK triggers the release of the substrate protein, thus completing the reaction cycle. Several rounds of ATP-dependent interactions between DnaJ, DnaK and GrpE are required for fully efficient folding. Also involved, together with DnaK and GrpE, in the DNA replication of plasmids through activation of initiation proteins. This is Chaperone protein DnaJ from Exiguobacterium sp. (strain ATCC BAA-1283 / AT1b).